We begin with the raw amino-acid sequence, 162 residues long: Anaerobic nitrite reductase (162 aa).

Ser-2 is modified (N-acetylserine). The Globin domain occupies 9–158 (VFTEEQEALV…LVAAIKFEMK (150 aa)). The Homodimerization signature appears at 42-46 (EIAPS). Residues Ser-52, Lys-66, His-70, Arg-100, and His-105 each contribute to the heme b site. Positions 112–124 (NEHFEVTRFALLE) match the Homodimerization motif.

This sequence belongs to the plant globin family. Homodimer with distinct heme coordination in each subunits. Requires heme b as cofactor. As to expression, root nodules.

Its subcellular location is the cytoplasm. It localises to the nucleus. The catalysed reaction is Fe(III)-heme b-[protein] + nitric oxide + H2O = Fe(II)-heme b-[protein] + nitrite + 2 H(+). In terms of biological role, phytoglobin that reduces nitrite to nitric oxide (NO) under anoxic conditions (e.g. during flooding or in waterlogged soil) and upon root nodulation. Required for general plant development and during nodulation, especially for the onset of symbiosis. Monitors nitric oxide (NO) levels during early phase of the nitrogen-fixing symbiosis and buffers oxygen in functioning nodules. May not function as an oxygen storage or transport protein. Has an unusually high affinity for O(2) through a hexacoordinate heme iron because of a very low dissociation constant. The sequence is that of Anaerobic nitrite reductase from Parasponia andersonii (Sponia andersonii).